Consider the following 357-residue polypeptide: S-adenosyl-L-methionine:benzoic acid/salicylic acid carboxyl methyltransferase 2 (357 aa).

Tyrosine 18 serves as a coordination point for S-adenosyl-L-homocysteine. Glutamine 25 is a binding site for benzoate. The S-adenosyl-L-homocysteine site is built by cysteine 59, asparagine 64, aspartate 96, leucine 97, serine 135, and phenylalanine 136. Position 157 (tryptophan 157) interacts with benzoate. The Mg(2+) site is built by asparagine 168, aspartate 254, phenylalanine 256, and asparagine 257. Position 260 (glutamine 260) interacts with benzoate.

The protein belongs to the methyltransferase superfamily. Type-7 methyltransferase family. In terms of tissue distribution, predominantly expressed in petal limbs and tubes of corollas.

The catalysed reaction is benzoate + S-adenosyl-L-methionine = methyl benzoate + S-adenosyl-L-homocysteine. It catalyses the reaction salicylate + S-adenosyl-L-methionine = methyl salicylate + S-adenosyl-L-homocysteine. It participates in aromatic compound metabolism. In terms of biological role, converts benzoic acid into the volatile ester methyl benzoates. This scent, mostly produced in a rhythmical, diurnal manner, attracts the pollinators. The protein is S-adenosyl-L-methionine:benzoic acid/salicylic acid carboxyl methyltransferase 2 of Petunia hybrida (Petunia).